We begin with the raw amino-acid sequence, 941 residues long: Ankyrin repeat and MYND domain-containing protein 1 (941 aa).

MORN repeat units follow at residues 2–24 (YQGE…TGES), 25–47 (YHGQ…DGSS), and 70–92 (FQGL…DGSQ). ANK repeat units lie at residues 292-321 (KGYT…DVNK), 513-542 (MRRM…DPNL), 545-574 (VPMQ…RTDI), 581-613 (STLT…DVDA), 657-691 (GGRT…NPNL), 694-723 (SGHS…DPNL), and 737-766 (CDLT…DILK). Residues cysteine 880, cysteine 883, cysteine 894, cysteine 897, cysteine 903, cysteine 907, histidine 916, and cysteine 920 each coordinate Zn(2+). The segment at 880–920 (CYQCGRSIGVRLLPCPRCYGILTCSKYCKTKAWTEFHKKDC) adopts an MYND-type zinc-finger fold.

The chain is Ankyrin repeat and MYND domain-containing protein 1 (ANKMY1) from Homo sapiens (Human).